Here is a 138-residue protein sequence, read N- to C-terminus: Large ribosomal subunit protein uL16 (138 aa).

The span at 1-15 (MLSPRKVKYRKKQRG) shows a compositional bias: basic residues. Residues 1 to 21 (MLSPRKVKYRKKQRGRLSGEA) form a disordered region.

It belongs to the universal ribosomal protein uL16 family. As to quaternary structure, part of the 50S ribosomal subunit.

Its function is as follows. Binds 23S rRNA and is also seen to make contacts with the A and possibly P site tRNAs. This chain is Large ribosomal subunit protein uL16, found in Borrelia recurrentis (strain A1).